The chain runs to 178 residues: Large ribosomal subunit protein uL6 (178 aa).

It belongs to the universal ribosomal protein uL6 family. In terms of assembly, part of the 50S ribosomal subunit.

Its function is as follows. This protein binds to the 23S rRNA, and is important in its secondary structure. It is located near the subunit interface in the base of the L7/L12 stalk, and near the tRNA binding site of the peptidyltransferase center. This chain is Large ribosomal subunit protein uL6, found in Helicobacter pylori (strain Shi470).